The sequence spans 43 residues: uncharacterized protein (43 aa).

Residues 1 to 17 (MYRRLLLNLFCMVFLQA) form the signal peptide.

This is an uncharacterized protein from Helicobacter pylori (strain J99 / ATCC 700824) (Campylobacter pylori J99).